The chain runs to 170 residues: Large ribosomal subunit protein uL11 (170 aa).

This sequence belongs to the universal ribosomal protein uL11 family. As to quaternary structure, part of the ribosomal stalk of the 50S ribosomal subunit. Interacts with L10 and the large rRNA to form the base of the stalk. L10 forms an elongated spine to which L12 dimers bind in a sequential fashion forming a multimeric L10(L12)X complex.

Functionally, forms part of the ribosomal stalk which helps the ribosome interact with GTP-bound translation factors. The chain is Large ribosomal subunit protein uL11 from Desulfurococcus amylolyticus (strain DSM 18924 / JCM 16383 / VKM B-2413 / 1221n) (Desulfurococcus kamchatkensis).